A 586-amino-acid chain; its full sequence is Phosphatidylinositol-3-phosphatase SAC1-B (586 aa).

At methionine 1–lysine 519 the chain is on the cytoplasmic side. Residues leucine 121–glycine 450 form the SAC domain. The tract at residues threonine 451 to aspartate 586 is essential for phosphatidylinositol-4-phosphate phosphatase activity. Residues phenylalanine 520–methionine 540 traverse the membrane as a helical segment. Over alanine 541–glutamate 547 the chain is Lumenal. The helical transmembrane segment at threonine 548–phenylalanine 568 threads the bilayer. Topologically, residues asparagine 569 to aspartate 586 are cytoplasmic.

Its subcellular location is the endoplasmic reticulum membrane. It localises to the golgi apparatus membrane. The catalysed reaction is a 1,2-diacyl-sn-glycero-3-phospho-(1D-myo-inositol-3-phosphate) + H2O = a 1,2-diacyl-sn-glycero-3-phospho-(1D-myo-inositol) + phosphate. It catalyses the reaction a 1,2-diacyl-sn-glycero-3-phospho-(1D-myo-inositol 4-phosphate) + H2O = a 1,2-diacyl-sn-glycero-3-phospho-(1D-myo-inositol) + phosphate. Phosphoinositide phosphatase which catalyzes the hydrolysis of phosphatidylinositol 4-phosphate (PtdIns(4)P), phosphatidylinositol 3-phosphate (PtdIns(3)P) and has low activity towards phosphatidylinositol-3,5-bisphosphate (PtdIns(3,5)P2). The polypeptide is Phosphatidylinositol-3-phosphatase SAC1-B (sacm1lb) (Danio rerio (Zebrafish)).